Consider the following 680-residue polypeptide: Forkhead box protein P4 (680 aa).

Over residues 1-17 (MMVESASETIRSAPSGQ) the composition is skewed to polar residues. Positions 1–56 (MMVESASETIRSAPSGQNGVGSLSGQADGSSGGATGTTASGTGREVTTGADSNGEM) are disordered. Phosphoserine occurs at positions 52 and 86. Glycyl lysine isopeptide (Lys-Gly) (interchain with G-Cter in SUMO2) cross-links involve residues K175 and K246. Residues 262–306 (FAAPPKVSPPLSHHTLPNGQPTVLTSRRDSSSHEETPGSHPLYGH) are disordered. Residues 276 to 286 (TLPNGQPTVLT) are compositionally biased toward polar residues. A compositionally biased stretch (basic and acidic residues) spans 287-298 (SRRDSSSHEETP). The C2H2-type zinc finger occupies 307-332 (GECKWPGCETLCEDLGQFIKHLNTEH). The interval 349–370 (VQQLEIQLAKESERLQAMMAHL) is leucine-zipper. K378 participates in a covalent cross-link: Glycyl lysine isopeptide (Lys-Gly) (interchain with G-Cter in SUMO2). Residues 407–445 (GLVHPPTSAAAPVTPLRPPGLGSASLHGGGPARRRSSDK) form a disordered region. The segment at residues 467–559 (RPPFTYASLI…KMTGSPTLVK (93 aa)) is a DNA-binding region (fork-head). A Phosphoserine modification is found at S554. The tract at residues 602-680 (PLSHDDVGAP…EEELPGEELS (79 aa)) is disordered. A compositionally biased stretch (polar residues) spans 617-635 (SNGSSSPPRLSPPQYSHQV). Residues 668–680 (RDLEEELPGEELS) are compositionally biased toward acidic residues.

As to quaternary structure, forms homodimers and heterodimers with FOXP1 and FOXP2. Dimerization is required for DNA-binding.

The protein resides in the nucleus. Its function is as follows. Transcriptional repressor that represses lung-specific expression. This chain is Forkhead box protein P4 (FOXP4), found in Homo sapiens (Human).